The following is a 144-amino-acid chain: Putative pre-16S rRNA nuclease (144 aa).

The protein belongs to the YqgF nuclease family.

The protein localises to the cytoplasm. Functionally, could be a nuclease involved in processing of the 5'-end of pre-16S rRNA. This is Putative pre-16S rRNA nuclease from Pseudomonas paraeruginosa (strain DSM 24068 / PA7) (Pseudomonas aeruginosa (strain PA7)).